A 92-amino-acid polypeptide reads, in one-letter code: Small ribosomal subunit protein uS19 (92 aa).

This sequence belongs to the universal ribosomal protein uS19 family.

Its function is as follows. Protein S19 forms a complex with S13 that binds strongly to the 16S ribosomal RNA. This Vibrio parahaemolyticus serotype O3:K6 (strain RIMD 2210633) protein is Small ribosomal subunit protein uS19.